The chain runs to 200 residues: Large ribosomal subunit protein uL4 (200 aa).

The segment at 42–65 is disordered; sequence TRAQKTRSEVSGGGAKPWRQKGTG.

The protein belongs to the universal ribosomal protein uL4 family. As to quaternary structure, part of the 50S ribosomal subunit.

One of the primary rRNA binding proteins, this protein initially binds near the 5'-end of the 23S rRNA. It is important during the early stages of 50S assembly. It makes multiple contacts with different domains of the 23S rRNA in the assembled 50S subunit and ribosome. Functionally, forms part of the polypeptide exit tunnel. This is Large ribosomal subunit protein uL4 from Aliivibrio fischeri (strain MJ11) (Vibrio fischeri).